The following is a 401-amino-acid chain: Rab-interacting lysosomal protein (401 aa).

One can recognise an RH1 domain in the interval 11–101 (PGWGSREAAG…REENERLRRE (91 aa)). A coiled-coil region spans residues 75 to 181 (DSLQVSAQPA…AQDRERERQQ (107 aa)). Disordered regions lie at residues 167–239 (TQLR…SEAG) and 304–388 (KMLG…SALH). The span at 172–181 (AQDRERERQQ) shows a compositional bias: basic and acidic residues. Residues 240-316 (QCRFSREEFE…GTPEEAESSE (77 aa)) form the RH2 domain. The segment at 272–333 (FQRELLTDHR…LLSDDKGDHP (62 aa)) is necessary for interaction with RAB7A and RAB34, lysosomal distribution and morphology. Phosphothreonine is present on Thr-308. The segment covering 310 to 319 (EEAESSEDEA) has biased composition (acidic residues). Phosphoserine occurs at positions 314 and 315.

As to quaternary structure, homodimer. Interacts with RAB7A. Interacts with RAB34. Identified in a complex with MREG and DCTN1; interacts directly with MREG. Interacts with CLN3. Interacts with FLCN; the interaction is direct and promotes association between RILP and RAB34. In terms of tissue distribution, ubiquitous. Strongly expressed in fetal heart, heart, stomach, spleen, adrenal gland, thyroid gland, salivary gland, fetal liver, liver and lung. Poorly expressed in brain.

Its subcellular location is the late endosome membrane. It localises to the lysosome membrane. The protein resides in the cytoplasmic vesicle. It is found in the phagosome membrane. In terms of biological role, rab effector playing a role in late endocytic transport to degradative compartments. Involved in the regulation of lysosomal morphology and distribution. Induces recruitment of dynein-dynactin motor complexes to Rab7A-containing late endosome and lysosome compartments. Promotes centripetal migration of phagosomes and the fusion of phagosomes with the late endosomes and lysosomes. In Homo sapiens (Human), this protein is Rab-interacting lysosomal protein (RILP).